Consider the following 358-residue polypeptide: Thiol protease aleurain-like (358 aa).

The signal sequence occupies residues 1–21; sequence MSVKLNLSSSILLILFAAAAS. Residues 22-140 constitute a propeptide, activation peptide; it reads KEIGFDESNP…KGSHKITEAT (119 aa). N-linked (GlcNAc...) asparagine glycosylation is present at Asn125. Disulfide bonds link Cys162-Cys205 and Cys196-Cys238. The active site involves Cys165. Asn254 is a glycosylation site (N-linked (GlcNAc...) asparagine). Residues Cys296 and Cys346 are joined by a disulfide bond. Catalysis depends on residues His305 and Asn325.

It belongs to the peptidase C1 family.

The protein localises to the vacuole. It catalyses the reaction Hydrolysis of proteins, acting as an aminopeptidase (notably, cleaving Arg-|-Xaa bonds) as well as an endopeptidase.. Its function is as follows. May play a role in proteolysis leading to mobilization of nitrogen during senescence and starvation. In Arabidopsis thaliana (Mouse-ear cress), this protein is Thiol protease aleurain-like.